The following is a 259-amino-acid chain: 5'-nucleotidase SurE (259 aa).

Aspartate 8, aspartate 9, serine 40, and asparagine 92 together coordinate a divalent metal cation.

Belongs to the SurE nucleotidase family. A divalent metal cation is required as a cofactor.

The protein resides in the cytoplasm. The catalysed reaction is a ribonucleoside 5'-phosphate + H2O = a ribonucleoside + phosphate. Functionally, nucleotidase that shows phosphatase activity on nucleoside 5'-monophosphates. In Xanthomonas oryzae pv. oryzae (strain MAFF 311018), this protein is 5'-nucleotidase SurE.